A 124-amino-acid chain; its full sequence is Ribonuclease pancreatic (124 aa).

The tract at residues R1–P23 is disordered. Residues K7 and R10 each contribute to the substrate site. Catalysis depends on H12, which acts as the Proton acceptor. The span at D14–P23 shows a compositional bias: polar residues. Intrachain disulfides connect C26-C84, C40-C95, C58-C110, and C65-C72. Residues K41–T45 and K66 each bind substrate. N76 is a glycosylation site (N-linked (GlcNAc...) asparagine; partial). Substrate is bound at residue R85. H119 functions as the Proton donor in the catalytic mechanism.

Belongs to the pancreatic ribonuclease family. In terms of assembly, monomer. Interacts with and forms tight 1:1 complexes with RNH1. Dimerization of two such complexes may occur. Interaction with RNH1 inhibits this protein. In terms of tissue distribution, pancreas.

It is found in the secreted. The catalysed reaction is an [RNA] containing cytidine + H2O = an [RNA]-3'-cytidine-3'-phosphate + a 5'-hydroxy-ribonucleotide-3'-[RNA].. It catalyses the reaction an [RNA] containing uridine + H2O = an [RNA]-3'-uridine-3'-phosphate + a 5'-hydroxy-ribonucleotide-3'-[RNA].. Endonuclease that catalyzes the cleavage of RNA on the 3' side of pyrimidine nucleotides. Acts on single-stranded and double-stranded RNA. This Balaenoptera acutorostrata (Common minke whale) protein is Ribonuclease pancreatic (RNASE1).